A 345-amino-acid chain; its full sequence is Aspartate--ammonia ligase (345 aa).

The protein belongs to the class-II aminoacyl-tRNA synthetase family. AsnA subfamily.

The protein localises to the cytoplasm. It carries out the reaction L-aspartate + NH4(+) + ATP = L-asparagine + AMP + diphosphate + H(+). The protein operates within amino-acid biosynthesis; L-asparagine biosynthesis; L-asparagine from L-aspartate (ammonia route): step 1/1. The sequence is that of Aspartate--ammonia ligase from Bacteroides thetaiotaomicron (strain ATCC 29148 / DSM 2079 / JCM 5827 / CCUG 10774 / NCTC 10582 / VPI-5482 / E50).